A 616-amino-acid chain; its full sequence is Mitochondrial Rho GTPase 2 (616 aa).

The Cytoplasmic portion of the chain corresponds to 1 to 590 (MKRDVRILLL…HDTELSTASF (590 aa)). One can recognise a Miro 1 domain in the interval 2–168 (KRDVRILLLG…FYYAQKAVLH (167 aa)). Residues Gly-16, Lys-17, Thr-18, and Ser-19 each contribute to the GTP site. Thr-18 is a Mg(2+) binding site. Residue Asp-57 participates in Mg(2+) binding. GTP is bound by residues Ser-59, Asn-118, Lys-119, Asp-121, Ala-149, and Lys-150. 2 consecutive EF-hand domains span residues 184-219 (QCKK…CFGN) and 304-339 (FGYQ…FPYT). Ca(2+) is bound by residues Asp-199, Asn-201, Glu-208, Asp-317, Asp-319, Asp-321, and Glu-328. In terms of domain architecture, Miro 2 spans 416–577 (RNVFLCRVIG…YSKLATAAAF (162 aa)). The GTP site is built by Gly-428, Gly-430, Lys-431, Ser-432, and Ala-433. Ser-432 serves as a coordination point for Mg(2+). Glu-474 provides a ligand contact to Mg(2+). The GTP site is built by Lys-528, Asp-530, and Cys-559. Residues 591–613 (WLRVALGATVAAVVGFTLYKALL) form a helical; Anchor for type IV membrane protein membrane-spanning segment. Over 614-616 (RSK) the chain is Mitochondrial intermembrane.

The protein belongs to the mitochondrial Rho GTPase family. As to quaternary structure, homodimer.

The protein resides in the mitochondrion outer membrane. It catalyses the reaction GTP + H2O = GDP + phosphate + H(+). The enzyme catalyses ATP + H2O = ADP + phosphate + H(+). It carries out the reaction UTP + H2O = UDP + phosphate + H(+). Functionally, atypical mitochondrial nucleoside-triphosphatase (NTPase) involved in mitochondrial trafficking. Probably involved in control of anterograde transport of mitochondria and their subcellular distribution. Can hydrolyze GTP, ATP and UTP. The chain is Mitochondrial Rho GTPase 2 (rhot2) from Xenopus tropicalis (Western clawed frog).